The following is a 124-amino-acid chain: Putative iron-sulfur cluster insertion protein ErpA (124 aa).

3 residues coordinate iron-sulfur cluster: cysteine 52, cysteine 116, and cysteine 118.

Belongs to the HesB/IscA family. Homodimer. Iron-sulfur cluster is required as a cofactor.

Functionally, required for insertion of 4Fe-4S clusters. This Ralstonia pickettii (strain 12J) protein is Putative iron-sulfur cluster insertion protein ErpA.